The sequence spans 125 residues: Large ribosomal subunit protein bL12 (125 aa).

The protein belongs to the bacterial ribosomal protein bL12 family. Homodimer. Part of the ribosomal stalk of the 50S ribosomal subunit. Forms a multimeric L10(L12)X complex, where L10 forms an elongated spine to which 2 to 4 L12 dimers bind in a sequential fashion. Binds GTP-bound translation factors.

Functionally, forms part of the ribosomal stalk which helps the ribosome interact with GTP-bound translation factors. Is thus essential for accurate translation. This chain is Large ribosomal subunit protein bL12, found in Polaromonas sp. (strain JS666 / ATCC BAA-500).